We begin with the raw amino-acid sequence, 233 residues long: Lipoprotein-releasing system ATP-binding protein LolD (233 aa).

In terms of domain architecture, ABC transporter spans 6–233; sequence LQCDNLCKRY…TAELSLMGAE (228 aa). Residue 42–49 coordinates ATP; the sequence is GSSGSGKS.

Belongs to the ABC transporter superfamily. Lipoprotein translocase (TC 3.A.1.125) family. As to quaternary structure, the complex is composed of two ATP-binding proteins (LolD) and two transmembrane proteins (LolC and LolE).

Its subcellular location is the cell inner membrane. Its function is as follows. Part of the ABC transporter complex LolCDE involved in the translocation of mature outer membrane-directed lipoproteins, from the inner membrane to the periplasmic chaperone, LolA. Responsible for the formation of the LolA-lipoprotein complex in an ATP-dependent manner. This chain is Lipoprotein-releasing system ATP-binding protein LolD, found in Salmonella choleraesuis (strain SC-B67).